The following is a 270-amino-acid chain: Formamidopyrimidine-DNA glycosylase (270 aa).

P2 acts as the Schiff-base intermediate with DNA in catalysis. The Proton donor role is filled by E3. K58 serves as the catalytic Proton donor; for beta-elimination activity. DNA is bound by residues H90, R109, and R152. The FPG-type zinc-finger motif lies at 237–270 (RVYGREGEPCHCGTVIRRRVDGGRSTFYCPKCQK). The Proton donor; for delta-elimination activity role is filled by R260.

It belongs to the FPG family. As to quaternary structure, monomer. Requires Zn(2+) as cofactor.

It carries out the reaction Hydrolysis of DNA containing ring-opened 7-methylguanine residues, releasing 2,6-diamino-4-hydroxy-5-(N-methyl)formamidopyrimidine.. The catalysed reaction is 2'-deoxyribonucleotide-(2'-deoxyribose 5'-phosphate)-2'-deoxyribonucleotide-DNA = a 3'-end 2'-deoxyribonucleotide-(2,3-dehydro-2,3-deoxyribose 5'-phosphate)-DNA + a 5'-end 5'-phospho-2'-deoxyribonucleoside-DNA + H(+). Involved in base excision repair of DNA damaged by oxidation or by mutagenic agents. Acts as a DNA glycosylase that recognizes and removes damaged bases. Has a preference for oxidized purines, such as 7,8-dihydro-8-oxoguanine (8-oxoG). Has AP (apurinic/apyrimidinic) lyase activity and introduces nicks in the DNA strand. Cleaves the DNA backbone by beta-delta elimination to generate a single-strand break at the site of the removed base with both 3'- and 5'-phosphates. This Rhizorhabdus wittichii (strain DSM 6014 / CCUG 31198 / JCM 15750 / NBRC 105917 / EY 4224 / RW1) (Sphingomonas wittichii) protein is Formamidopyrimidine-DNA glycosylase.